The chain runs to 125 residues: Small ribosomal subunit protein uS13 (125 aa).

The segment at 92-125 (RRSLPVRGQNTQTNARTRKGKRKTVAGKKKAARK) is disordered. Basic residues predominate over residues 107–125 (RTRKGKRKTVAGKKKAARK).

It belongs to the universal ribosomal protein uS13 family. Part of the 30S ribosomal subunit. Forms a loose heterodimer with protein S19. Forms two bridges to the 50S subunit in the 70S ribosome.

Functionally, located at the top of the head of the 30S subunit, it contacts several helices of the 16S rRNA. In the 70S ribosome it contacts the 23S rRNA (bridge B1a) and protein L5 of the 50S subunit (bridge B1b), connecting the 2 subunits; these bridges are implicated in subunit movement. Contacts the tRNAs in the A and P-sites. This Chlorobium luteolum (strain DSM 273 / BCRC 81028 / 2530) (Pelodictyon luteolum) protein is Small ribosomal subunit protein uS13.